Consider the following 459-residue polypeptide: Zinc finger chaperone zpr1 (459 aa).

2 consecutive C4-type zinc fingers follow at residues 38–70 (CMECGKNGTTKLLLTVIPYFREVVLMSFECPHC) and 259–291 (CPSCSHQCDTHMKLLDIPHFKEVIIMSTVCDRC).

Belongs to the ZPR1 family.

The protein resides in the cytoplasm. The protein localises to the nucleus. In terms of biological role, acts as a protein folding chaperone for elongation factor 1-alpha. The chain is Zinc finger chaperone zpr1 from Schizosaccharomyces pombe (strain 972 / ATCC 24843) (Fission yeast).